The chain runs to 115 residues: NADH-ubiquinone oxidoreductase chain 3 (115 aa).

A run of 3 helical transmembrane segments spans residues 3-23 (LYTV…VAFW), 55-75 (FFLV…LLPL), and 86-106 (TMMI…AYEW).

The protein belongs to the complex I subunit 3 family. Core subunit of respiratory chain NADH dehydrogenase (Complex I) which is composed of 45 different subunits. Interacts with TMEM186. Interacts with TMEM242.

The protein localises to the mitochondrion inner membrane. The catalysed reaction is a ubiquinone + NADH + 5 H(+)(in) = a ubiquinol + NAD(+) + 4 H(+)(out). In terms of biological role, core subunit of the mitochondrial membrane respiratory chain NADH dehydrogenase (Complex I) which catalyzes electron transfer from NADH through the respiratory chain, using ubiquinone as an electron acceptor. Essential for the catalytic activity of complex I. The protein is NADH-ubiquinone oxidoreductase chain 3 of Mus musculus (Mouse).